A 618-amino-acid chain; its full sequence is Mitochondrial Rho GTPase 1 (618 aa).

The Cytoplasmic portion of the chain corresponds to 1 to 592 (MKKDVRILLV…TQADLKSSTF (592 aa)). The 167-residue stretch at 2–168 (KKDVRILLVG…FYYAQKAVLH (167 aa)) folds into the Miro 1 domain. The GTP site is built by Arg-14, Gly-16, Lys-17, Thr-18, and Ser-19. Thr-18 provides a ligand contact to Mg(2+). The Mg(2+) site is built by Pro-35 and Asp-57. Residue Ser-59 participates in GTP binding. Lys-92 carries the post-translational modification N6-acetyllysine. Residues Asn-118, Lys-119, Asp-121, Ala-149, and Lys-150 each contribute to the GTP site. A Glycyl lysine isopeptide (Lys-Gly) (interchain with G-Cter in ubiquitin) cross-link involves residue Lys-153. In terms of domain architecture, EF-hand 1 spans 184 to 219 (ACIKALTRIFKISDQDNDGTLNDAELNFFQRICFNT). The Ca(2+) site is built by Asp-197, Asp-199, Asp-201, Thr-203, and Glu-208. Lys-235 participates in a covalent cross-link: Glycyl lysine isopeptide (Lys-Gly) (interchain with G-Cter in ubiquitin). In terms of domain architecture, EF-hand 2 spans 304–339 (HAYLFLQSTFDKHDLDRDCALSPDELKDLFKVFPYI). Asp-317, Asp-319, Asp-321, Ala-323, and Glu-328 together coordinate Ca(2+). Positions 416 to 579 (RNVFRCNVIG…FVKLTTMAMY (164 aa)) constitute a Miro 2 domain. Residues Asn-428, Cys-429, Gly-430, Lys-431, Ser-432, Gly-433, and Lys-447 each contribute to the GTP site. Asn-428 is a binding site for Mg(2+). GDP contacts are provided by Asn-428, Cys-429, Gly-430, Lys-431, Ser-432, Gly-433, Lys-447, Lys-454, Ser-477, Glu-478, Lys-528, Asp-530, Thr-558, Cys-559, and Asn-560. Positions 528, 530, 558, and 559 each coordinate GTP. Lys-572 is covalently cross-linked (Glycyl lysine isopeptide (Lys-Gly) (interchain with G-Cter in ubiquitin)). Residues 593 to 615 (WLRASFGATVFAVLGFAMYKALL) form a helical; Anchor for type IV membrane protein membrane-spanning segment. At 616-618 (KQR) the chain is on the mitochondrial intermembrane side.

It belongs to the mitochondrial Rho GTPase family. As to quaternary structure, homodimer. Interacts with the kinesin-binding proteins TRAK1/OIP106 and TRAK2/GRIF1, forming a link between mitochondria and the trafficking apparatus of the microtubules. Interacts with RAP1GDS1. Interacts with ARMCX1. Found in a complex with KIF5B, OGT, RHOT2 and TRAK1. Post-translationally, ubiquitinated by PRKN during mitophagy, leading to its degradation and enhancement of mitophagy. Deubiquitinated by USP30. Acetylation on Lys-92 decreases sensitivity of mitochondrial transport to elevated Ca(2+) levels, increases mitochondrial transport and promotes axon growth. Deacetylated by HDAC6 which blocks mitochondrial transport and mediates axon growth inhibition. As to expression, ubiquitously expressed. Expressed at high level in heart and skeletal muscle.

It localises to the mitochondrion outer membrane. It carries out the reaction GTP + H2O = GDP + phosphate + H(+). The enzyme catalyses ATP + H2O = ADP + phosphate + H(+). It catalyses the reaction UTP + H2O = UDP + phosphate + H(+). Functionally, atypical mitochondrial nucleoside-triphosphatase (NTPase) involved in mitochondrial trafficking. Probably involved in control of anterograde transport of mitochondria and their subcellular distribution. Promotes mitochondrial fission during high calcium conditions. Can hydrolyze GTP, ATP and UTP. This chain is Mitochondrial Rho GTPase 1 (RHOT1), found in Homo sapiens (Human).